The primary structure comprises 436 residues: Enolase (436 aa).

Substrate-binding residues include His-159 and Glu-168. Glu-211 functions as the Proton donor in the catalytic mechanism. The Mg(2+) site is built by Asp-246, Glu-295, and Asp-320. Substrate-binding residues include Glu-295 and Asp-320. The Proton acceptor role is filled by Lys-345. Substrate is bound by residues 372–375 (SHRS) and Lys-396.

This sequence belongs to the enolase family. Homodimer. Requires Mg(2+) as cofactor.

The protein resides in the cytoplasm. The catalysed reaction is (2R)-2-phosphoglycerate = phosphoenolpyruvate + H2O. Its pathway is carbohydrate degradation; glycolysis; pyruvate from D-glyceraldehyde 3-phosphate: step 4/5. The polypeptide is Enolase (Cunninghamella elegans).